The chain runs to 541 residues: ATP synthase subunit alpha (541 aa).

173–180 is an ATP binding site; the sequence is GDRQTGKT. A compositionally biased stretch (basic and acidic residues) spans 517-527; it reads GIEPGVEEHES. A disordered region spans residues 517–541; that stretch reads GIEPGVEEHESLGATAVNQETIVKK. The segment covering 532–541 has biased composition (polar residues); the sequence is AVNQETIVKK.

The protein belongs to the ATPase alpha/beta chains family. F-type ATPases have 2 components, CF(1) - the catalytic core - and CF(0) - the membrane proton channel. CF(1) has five subunits: alpha(3), beta(3), gamma(1), delta(1), epsilon(1). CF(0) has three main subunits: a(1), b(2) and c(9-12). The alpha and beta chains form an alternating ring which encloses part of the gamma chain. CF(1) is attached to CF(0) by a central stalk formed by the gamma and epsilon chains, while a peripheral stalk is formed by the delta and b chains.

The protein localises to the cell membrane. It catalyses the reaction ATP + H2O + 4 H(+)(in) = ADP + phosphate + 5 H(+)(out). Produces ATP from ADP in the presence of a proton gradient across the membrane. The alpha chain is a regulatory subunit. The sequence is that of ATP synthase subunit alpha from Kocuria rhizophila (strain ATCC 9341 / DSM 348 / NBRC 103217 / DC2201).